Reading from the N-terminus, the 332-residue chain is Ribosomal RNA small subunit methyltransferase C (332 aa).

Belongs to the methyltransferase superfamily. RsmC family. As to quaternary structure, monomer.

It localises to the cytoplasm. It catalyses the reaction guanosine(1207) in 16S rRNA + S-adenosyl-L-methionine = N(2)-methylguanosine(1207) in 16S rRNA + S-adenosyl-L-homocysteine + H(+). Functionally, specifically methylates the guanine in position 1207 of 16S rRNA in the 30S particle. This Pseudomonas putida (strain ATCC 700007 / DSM 6899 / JCM 31910 / BCRC 17059 / LMG 24140 / F1) protein is Ribosomal RNA small subunit methyltransferase C.